A 159-amino-acid polypeptide reads, in one-letter code: V-type proton ATPase 16 kDa proteolipid subunit c (159 aa).

The Lumenal portion of the chain corresponds to M1–Y12. Residues G13 to G35 form a helical membrane-spanning segment. At T36–S57 the chain is on the cytoplasmic side. The chain crosses the membrane as a helical span at residues I58–I78. The Lumenal segment spans residues A79–H96. The helical transmembrane segment at L97–G118 threads the bilayer. Topologically, residues D119–R130 are cytoplasmic. The helical transmembrane segment at L131–L156 threads the bilayer. At Y157 to K159 the chain is on the lumenal side.

The protein belongs to the V-ATPase proteolipid subunit family. V-ATPase is a heteromultimeric enzyme made up of two complexes: the ATP-hydrolytic V1 complex and the proton translocation V0 complex. The V1 complex consists of three catalytic AB heterodimers that form a heterohexamer, three peripheral stalks each consisting of EG heterodimers, one central rotor including subunits D and F, and the regulatory subunits C and H. The proton translocation complex V0 consists of the proton transport subunit a, a ring of proteolipid subunits c9c'', rotary subunit d, subunits e and f, and the accessory subunits VhaAC45 and ATP6AP2. Expressed in the larval middle mid-gut; predominantly in the copper cell region with lower levels of expression in the interstitial cells.

The protein localises to the membrane. Its function is as follows. Proton-conducting pore forming subunit of the V0 complex of vacuolar(H+)-ATPase (V-ATPase), a multisubunit enzyme composed of a peripheral complex (V1) that hydrolyzes ATP and a membrane integral complex (V0) that translocates protons. V-ATPase is responsible for acidifying and maintaining the pH of intracellular compartments and in some cell types, is targeted to the plasma membrane, where it is responsible for acidifying the extracellular environment. In enterocytes, acts as part of a pHCl-2 sensory pathway which mediates Tor-dependent larval growth and metabolism in response to zinc availability. Likely acts in maintaining enterocyte lysosomal acidification which consequently promotes Tor activation at the lysosome membrane. This is V-type proton ATPase 16 kDa proteolipid subunit c (Vha16-1) from Drosophila melanogaster (Fruit fly).